The chain runs to 305 residues: Ferrochelatase (305 aa).

His182 and Glu262 together coordinate Fe cation.

Belongs to the ferrochelatase family.

The protein localises to the cytoplasm. The enzyme catalyses heme b + 2 H(+) = protoporphyrin IX + Fe(2+). The protein operates within porphyrin-containing compound metabolism; protoheme biosynthesis; protoheme from protoporphyrin-IX: step 1/1. Functionally, catalyzes the ferrous insertion into protoporphyrin IX. This chain is Ferrochelatase, found in Herpetosiphon aurantiacus (strain ATCC 23779 / DSM 785 / 114-95).